The sequence spans 37 residues: Large ribosomal subunit protein bL36 (37 aa).

It belongs to the bacterial ribosomal protein bL36 family.

The sequence is that of Large ribosomal subunit protein bL36 from Dehalococcoides mccartyi (strain ATCC BAA-2266 / KCTC 15142 / 195) (Dehalococcoides ethenogenes (strain 195)).